Here is a 291-residue protein sequence, read N- to C-terminus: Nucleotide-binding protein LMHCC_0126 (291 aa).

13 to 20 (GMSGAGKT) serves as a coordination point for ATP. 63–66 (DLRG) provides a ligand contact to GTP.

It belongs to the RapZ-like family.

Displays ATPase and GTPase activities. The protein is Nucleotide-binding protein LMHCC_0126 of Listeria monocytogenes serotype 4a (strain HCC23).